We begin with the raw amino-acid sequence, 279 residues long: Putative ABC transporter ATP-binding protein GSU3001 (279 aa).

The region spanning 1-237 (MRFSVDLKAY…PAEMESVKLR (237 aa)) is the ABC transporter domain. An ATP-binding site is contributed by 36–43 (GSNGSGKT).

The protein belongs to the ABC transporter superfamily.

It is found in the cell inner membrane. Functionally, probably part of an ABC transporter complex. Responsible for energy coupling to the transport system. This is Putative ABC transporter ATP-binding protein GSU3001 from Geobacter sulfurreducens (strain ATCC 51573 / DSM 12127 / PCA).